Here is a 154-residue protein sequence, read N- to C-terminus: uncharacterized protein (154 aa).

Helical transmembrane passes span 26-48 (VSGW…GVVT), 97-119 (IAMF…LIVF), and 132-150 (GLYT…YCAW).

It is found in the cell membrane. This is an uncharacterized protein from Archaeoglobus fulgidus (strain ATCC 49558 / DSM 4304 / JCM 9628 / NBRC 100126 / VC-16).